Reading from the N-terminus, the 113-residue chain is U11-theraphotoxin-Hhn1o (113 aa).

A signal peptide spans 1 to 21; the sequence is MNTVRVTFLLVFVLAVSLGQA. The propeptide occupies 22–74; it reads DKDENRMEMQEKTEQGKSYLDFAENLLLQKLEELEAKLLEEDSEESRNSRQKR. Residues 61 to 83 form a disordered region; it reads EEDSEESRNSRQKRCIGEGVPCD. 2 cysteine pairs are disulfide-bonded: Cys-75/Cys-90 and Cys-82/Cys-95.

It belongs to the neurotoxin 14 (magi-1) family. 01 (HNTX-16) subfamily. As to expression, expressed by the venom gland.

The protein localises to the secreted. Probable ion channel inhibitor. In Cyriopagopus hainanus (Chinese bird spider), this protein is U11-theraphotoxin-Hhn1o.